A 290-amino-acid polypeptide reads, in one-letter code: 3-deoxy-manno-octulosonate cytidylyltransferase, mitochondrial (290 aa).

The N-terminal 50 residues, 1-50, are a transit peptide targeting the mitochondrion; that stretch reads MSVCSSSSSSQKTWIVNGILAGTAIAAAIGARAYLGRSKKFRSRVVGIIP.

The protein belongs to the KdsB family. Mg(2+) serves as cofactor. Expressed in roots, leaves, stems and siliques.

Its subcellular location is the mitochondrion outer membrane. It carries out the reaction 3-deoxy-alpha-D-manno-oct-2-ulosonate + CTP = CMP-3-deoxy-beta-D-manno-octulosonate + diphosphate. The protein operates within nucleotide-sugar biosynthesis; CMP-3-deoxy-D-manno-octulosonate biosynthesis; CMP-3-deoxy-D-manno-octulosonate from 3-deoxy-D-manno-octulosonate and CTP: step 1/1. Inhibited by 2beta-deoxy-Kdo. In terms of biological role, catalyzes the production of the sugar nucleotide CMP-3-deoxy-D-manno-octulosonate (CMP-KDO). CTP is the preferred nucleotide donor, but it can partially be replaced with UTP. Activates KDO during the biosynthesis of rhamnogalacturonan II (RG-II), a structurally complex pectic polysaccharide of the primary cell wall. RG-II is essential for the cell wall integrity of rapidly growing tissues and pollen tube growth and elongation. This chain is 3-deoxy-manno-octulosonate cytidylyltransferase, mitochondrial, found in Arabidopsis thaliana (Mouse-ear cress).